A 455-amino-acid chain; its full sequence is Oxidative stress induced growth inhibitor homolog osgn-1 (455 aa).

The protein belongs to the OKL38 family. NADPH is required as a cofactor.

The protein resides in the midbody. Functionally, monooxygenase catalytic activity. Involved in regulation of cytokinesis; promotes rho-1/RhoA activity, probably acting locally at the midbody in late cytokinesis. Monooxygenase activity is required to stabilize structures between primordial germ cells (PGCs), termed intercellular bridges. Dispensable for fertility. This chain is Oxidative stress induced growth inhibitor homolog osgn-1, found in Caenorhabditis elegans.